The sequence spans 743 residues: Phosphoribosylformylglycinamidine synthase subunit PurL (743 aa).

Residue H50 is part of the active site. Residues Y53 and K92 each contribute to the ATP site. E94 contacts Mg(2+). Substrate-binding positions include S95–H98 and R117. The Proton acceptor role is filled by H96. Mg(2+) is bound at residue D118. A substrate-binding site is contributed by Q241. D269 contributes to the Mg(2+) binding site. Residue E313–Q315 participates in substrate binding. ATP is bound by residues D494 and G531. Position 532 (N532) interacts with Mg(2+). A substrate-binding site is contributed by S534.

It belongs to the FGAMS family. As to quaternary structure, monomer. Part of the FGAM synthase complex composed of 1 PurL, 1 PurQ and 2 PurS subunits.

The protein localises to the cytoplasm. The catalysed reaction is N(2)-formyl-N(1)-(5-phospho-beta-D-ribosyl)glycinamide + L-glutamine + ATP + H2O = 2-formamido-N(1)-(5-O-phospho-beta-D-ribosyl)acetamidine + L-glutamate + ADP + phosphate + H(+). It participates in purine metabolism; IMP biosynthesis via de novo pathway; 5-amino-1-(5-phospho-D-ribosyl)imidazole from N(2)-formyl-N(1)-(5-phospho-D-ribosyl)glycinamide: step 1/2. Its function is as follows. Part of the phosphoribosylformylglycinamidine synthase complex involved in the purines biosynthetic pathway. Catalyzes the ATP-dependent conversion of formylglycinamide ribonucleotide (FGAR) and glutamine to yield formylglycinamidine ribonucleotide (FGAM) and glutamate. The FGAM synthase complex is composed of three subunits. PurQ produces an ammonia molecule by converting glutamine to glutamate. PurL transfers the ammonia molecule to FGAR to form FGAM in an ATP-dependent manner. PurS interacts with PurQ and PurL and is thought to assist in the transfer of the ammonia molecule from PurQ to PurL. This is Phosphoribosylformylglycinamidine synthase subunit PurL from Mesorhizobium japonicum (strain LMG 29417 / CECT 9101 / MAFF 303099) (Mesorhizobium loti (strain MAFF 303099)).